The chain runs to 432 residues: Glutamate-1-semialdehyde 2,1-aminomutase (432 aa).

Residue K265 is modified to N6-(pyridoxal phosphate)lysine.

This sequence belongs to the class-III pyridoxal-phosphate-dependent aminotransferase family. HemL subfamily. Homodimer. Requires pyridoxal 5'-phosphate as cofactor.

The protein resides in the cytoplasm. It carries out the reaction (S)-4-amino-5-oxopentanoate = 5-aminolevulinate. Its pathway is porphyrin-containing compound metabolism; protoporphyrin-IX biosynthesis; 5-aminolevulinate from L-glutamyl-tRNA(Glu): step 2/2. The protein is Glutamate-1-semialdehyde 2,1-aminomutase of Photobacterium profundum (strain SS9).